The primary structure comprises 165 residues: V-type proton ATPase 16 kDa proteolipid subunit (165 aa).

At 1–10 the chain is on the lumenal side; it reads MSSTFSGDET. A helical membrane pass occupies residues 11–33; the sequence is APFFGFLGAAAALVFSCMGAAYG. Residues 34–55 lie on the Cytoplasmic side of the membrane; that stretch reads TAKSGVGVASMGVMRPELVMKS. The chain crosses the membrane as a helical span at residues 56-76; the sequence is IVPVVMAGVLGIYGLIIAVII. Topologically, residues 77–95 are lumenal; the sequence is STGINPKAKSYYLFDGYAH. The chain crosses the membrane as a helical span at residues 96-117; sequence LSSGLACGLAGLSAGMAIGIVG. At 118–129 the chain is on the cytoplasmic side; it reads DAGVRANAQQPK. The helical transmembrane segment at 130 to 155 threads the bilayer; the sequence is LFVGMILILIFAEALALYGLIVGIIL. The Lumenal portion of the chain corresponds to 156–165; it reads SSRAGQSRAE.

This sequence belongs to the V-ATPase proteolipid subunit family. V-ATPase is a heteromultimeric enzyme composed of a peripheral catalytic V1 complex (main components: subunits A, B, C, D, E, and F) attached to an integral membrane V0 proton pore complex (main component: the proteolipid protein; which is present as a hexamer that forms the proton-conducting pore).

Its subcellular location is the vacuole membrane. Proton-conducting pore forming subunit of the membrane integral V0 complex of vacuolar ATPase. V-ATPase is responsible for acidifying a variety of intracellular compartments in eukaryotic cells. This Gossypium hirsutum (Upland cotton) protein is V-type proton ATPase 16 kDa proteolipid subunit (CVA16-2).